The chain runs to 287 residues: Small ribosomal subunit protein uS2 (287 aa).

Residues 233-287 are disordered; it reads HKAPQDDIEPMAEWEKQLLQSGDSSGETRPISGTDRPLDGDLSKGPAPQDEELSD. Residues 250-259 show a composition bias toward polar residues; it reads LLQSGDSSGE.

This sequence belongs to the universal ribosomal protein uS2 family.

The sequence is that of Small ribosomal subunit protein uS2 from Tropheryma whipplei (strain TW08/27) (Whipple's bacillus).